Reading from the N-terminus, the 500-residue chain is MSKDATLPVRGTVAELKLEKKLPKKIDAIIVAIFEGEDSIELAGGEILDFIFSTEQQADILTQLEAVGAKATANSITRVPGTDVAPVIAVGLGKADLLDDETLRRASGTAARSLGGFENVATTIGDLGLAAAVTGFGLGSYSYAGLRKETEESKDKTTTVTFISTGKDDKDVFVEAQIIVESVLLARDLVNTPSSHLYPESYSVIASNEASKHGLQTTILDEKQLADQGFGGILAVGNGSSRKPRLLRIDWKPRKAKKSIALVGKGITFDTGGISIKPGASMENMISDMGGSASVLATIIAAARLNLSINVSAFLPMAENMPSGDAFRPGDVITHFGGITSEILNTDAEGRLILADAIAYASEDKPDYLIDAATLTGAQLVALGLRTSGVMGTDEFRDSVAKTGREVGEQAWAMPLPEELDEQVKSPVADLRNVTNSRFAGMSAAGRYLQEFVGADIEWAHVDIAGPAYNTAGEFGYTPKRATGQPVRTFVQVLKDLSES.

2 residues coordinate Mn(2+): lysine 265 and aspartate 270. The active site involves lysine 277. Mn(2+) is bound by residues aspartate 288, aspartate 347, and glutamate 349. Arginine 351 is a catalytic residue.

Belongs to the peptidase M17 family. Requires Mn(2+) as cofactor.

Its subcellular location is the cytoplasm. It carries out the reaction Release of an N-terminal amino acid, Xaa-|-Yaa-, in which Xaa is preferably Leu, but may be other amino acids including Pro although not Arg or Lys, and Yaa may be Pro. Amino acid amides and methyl esters are also readily hydrolyzed, but rates on arylamides are exceedingly low.. The enzyme catalyses Release of an N-terminal amino acid, preferentially leucine, but not glutamic or aspartic acids.. Presumably involved in the processing and regular turnover of intracellular proteins. Catalyzes the removal of unsubstituted N-terminal amino acids from various peptides. This Corynebacterium glutamicum (strain ATCC 13032 / DSM 20300 / JCM 1318 / BCRC 11384 / CCUG 27702 / LMG 3730 / NBRC 12168 / NCIMB 10025 / NRRL B-2784 / 534) protein is Probable cytosol aminopeptidase.